The following is a 162-amino-acid chain: uncharacterized protein (162 aa).

Over residues 65–76 (EEKPLEVAQDRN) the composition is skewed to basic and acidic residues. Residues 65-93 (EEKPLEVAQDRNNKRKAPSHLEPAHDFIS) are disordered.

This is an uncharacterized protein from Bacillus subtilis (strain 168).